Consider the following 442-residue polypeptide: Trigger factor (442 aa).

A PPIase FKBP-type domain is found at 176–259 (GDFISLSLYV…VNAVIEISSP (84 aa)).

This sequence belongs to the FKBP-type PPIase family. Tig subfamily.

Its subcellular location is the cytoplasm. It carries out the reaction [protein]-peptidylproline (omega=180) = [protein]-peptidylproline (omega=0). Functionally, involved in protein export. Acts as a chaperone by maintaining the newly synthesized protein in an open conformation. Functions as a peptidyl-prolyl cis-trans isomerase. The chain is Trigger factor from Chlamydia trachomatis serovar A (strain ATCC VR-571B / DSM 19440 / HAR-13).